Reading from the N-terminus, the 183-residue chain is Ribosome maturation factor RimM (183 aa).

A PRC barrel domain is found at 104 to 183 (EGDYYWKDLI…TIEVDWDPGF (80 aa)).

The protein belongs to the RimM family. Binds ribosomal protein uS19.

The protein localises to the cytoplasm. Its function is as follows. An accessory protein needed during the final step in the assembly of 30S ribosomal subunit, possibly for assembly of the head region. Essential for efficient processing of 16S rRNA. May be needed both before and after RbfA during the maturation of 16S rRNA. It has affinity for free ribosomal 30S subunits but not for 70S ribosomes. The polypeptide is Ribosome maturation factor RimM (Cronobacter sakazakii (strain ATCC BAA-894) (Enterobacter sakazakii)).